Here is a 600-residue protein sequence, read N- to C-terminus: Elongation factor 4 (600 aa).

One can recognise a tr-type G domain in the interval 5 to 187 (KYIRNFSIIA…AIVNKLPPPK (183 aa)). GTP is bound by residues 17–22 (DHGKST) and 134–137 (NKID).

It belongs to the TRAFAC class translation factor GTPase superfamily. Classic translation factor GTPase family. LepA subfamily.

The protein resides in the cell inner membrane. The catalysed reaction is GTP + H2O = GDP + phosphate + H(+). Its function is as follows. Required for accurate and efficient protein synthesis under certain stress conditions. May act as a fidelity factor of the translation reaction, by catalyzing a one-codon backward translocation of tRNAs on improperly translocated ribosomes. Back-translocation proceeds from a post-translocation (POST) complex to a pre-translocation (PRE) complex, thus giving elongation factor G a second chance to translocate the tRNAs correctly. Binds to ribosomes in a GTP-dependent manner. This Rickettsia canadensis (strain McKiel) protein is Elongation factor 4.